Consider the following 384-residue polypeptide: Cytochrome b (384 aa).

A run of 4 helical transmembrane segments spans residues 32–52 (LGSL…FLAM), 76–98 (WLIR…IHIG), 113–133 (VWTV…LGYC), and 179–199 (FFTF…MHLM). Positions 82 and 96 each coordinate heme b. Heme b-binding residues include His-183 and His-197. Residue His-202 participates in a ubiquinone binding. The next 4 membrane-spanning stretches (helical) occupy residues 225–245 (FIFK…LFVF), 289–309 (LGGV…PITD), 321–341 (LSKF…KLGE), and 348–368 (FILM…ILVP).

This sequence belongs to the cytochrome b family. In terms of assembly, fungal cytochrome b-c1 complex contains 10 subunits; 3 respiratory subunits, 2 core proteins and 5 low-molecular weight proteins. Cytochrome b-c1 complex is a homodimer. Heme b serves as cofactor.

Its subcellular location is the mitochondrion inner membrane. In terms of biological role, component of the ubiquinol-cytochrome c reductase complex (complex III or cytochrome b-c1 complex) that is part of the mitochondrial respiratory chain. The b-c1 complex mediates electron transfer from ubiquinol to cytochrome c. Contributes to the generation of a proton gradient across the mitochondrial membrane that is then used for ATP synthesis. The sequence is that of Cytochrome b (COB) from Eremothecium gossypii (strain ATCC 10895 / CBS 109.51 / FGSC 9923 / NRRL Y-1056) (Yeast).